We begin with the raw amino-acid sequence, 226 residues long: Thioredoxin domain-containing protein 9 (226 aa).

Positions 74-180 constitute a Thioredoxin domain; that stretch reads REIPSERDFF…TTETLEWRLG (107 aa). Phosphoserine is present on residues serine 188, serine 221, and serine 223.

Forms ternary complexes with the chaperonin TCP1 complex, spanning the cylindrical chaperonin cavity and contacting at least 2 subunits.

Its subcellular location is the cytoplasm. It localises to the nucleus. The protein localises to the cytoskeleton. The protein resides in the microtubule organizing center. It is found in the centrosome. Its subcellular location is the midbody. Significantly diminishes the chaperonin TCP1 complex ATPase activity, thus negatively impacts protein folding, including that of actin or tubulin. The chain is Thioredoxin domain-containing protein 9 (TXNDC9) from Homo sapiens (Human).